The primary structure comprises 261 residues: Cytochrome c oxidase subunit 3 (261 aa).

The Mitochondrial matrix segment spans residues 1 to 15 (MAHQAHAYHMVDPSP). The chain crosses the membrane as a helical span at residues 16 to 34 (WPLTGAIAALLLTSGTAVW). At 35-40 (FHFHSL) the chain is on the mitochondrial intermembrane side. A helical transmembrane segment spans residues 41–66 (TLLTLGNVLLLLTMYQWWRDIIREGT). At 67–72 (FQGHHT) the chain is on the mitochondrial matrix side. Residues 73–105 (PPVQKGLRYGMILFITSEVFFFLGFFWAFYHAS) traverse the membrane as a helical segment. At 106 to 128 (LAPTPELGGCWPPTGITTLDPFE) the chain is on the mitochondrial intermembrane side. Residues 129–152 (VPLLNTAVLLASGVTVTWAHHSIM) traverse the membrane as a helical segment. Residues 153 to 155 (EGE) are Mitochondrial matrix-facing. Residues 156–183 (RKQTIQALTLTILLGFYFTFLQGMEYYE) form a helical membrane-spanning segment. At 184–190 (APFTIAD) the chain is on the mitochondrial intermembrane side. Residues 191–223 (GVYGSTFFVATGFHGLHVIIGSTFLAVCLLRQV) traverse the membrane as a helical segment. Residues 224 to 232 (QYHFTSEHH) are Mitochondrial matrix-facing. Residues 233–256 (FGFEAAAWYWHFVDVVWLFLYVSI) form a helical membrane-spanning segment. At 257-261 (YWWGS) the chain is on the mitochondrial intermembrane side.

The protein belongs to the cytochrome c oxidase subunit 3 family. Component of the cytochrome c oxidase (complex IV, CIV), a multisubunit enzyme composed of 14 subunits. The complex is composed of a catalytic core of 3 subunits MT-CO1, MT-CO2 and MT-CO3, encoded in the mitochondrial DNA, and 11 supernumerary subunits COX4I, COX5A, COX5B, COX6A, COX6B, COX6C, COX7A, COX7B, COX7C, COX8 and NDUFA4, which are encoded in the nuclear genome. The complex exists as a monomer or a dimer and forms supercomplexes (SCs) in the inner mitochondrial membrane with NADH-ubiquinone oxidoreductase (complex I, CI) and ubiquinol-cytochrome c oxidoreductase (cytochrome b-c1 complex, complex III, CIII), resulting in different assemblies (supercomplex SCI(1)III(2)IV(1) and megacomplex MCI(2)III(2)IV(2)).

It is found in the mitochondrion inner membrane. The catalysed reaction is 4 Fe(II)-[cytochrome c] + O2 + 8 H(+)(in) = 4 Fe(III)-[cytochrome c] + 2 H2O + 4 H(+)(out). Its function is as follows. Component of the cytochrome c oxidase, the last enzyme in the mitochondrial electron transport chain which drives oxidative phosphorylation. The respiratory chain contains 3 multisubunit complexes succinate dehydrogenase (complex II, CII), ubiquinol-cytochrome c oxidoreductase (cytochrome b-c1 complex, complex III, CIII) and cytochrome c oxidase (complex IV, CIV), that cooperate to transfer electrons derived from NADH and succinate to molecular oxygen, creating an electrochemical gradient over the inner membrane that drives transmembrane transport and the ATP synthase. Cytochrome c oxidase is the component of the respiratory chain that catalyzes the reduction of oxygen to water. Electrons originating from reduced cytochrome c in the intermembrane space (IMS) are transferred via the dinuclear copper A center (CU(A)) of subunit 2 and heme A of subunit 1 to the active site in subunit 1, a binuclear center (BNC) formed by heme A3 and copper B (CU(B)). The BNC reduces molecular oxygen to 2 water molecules using 4 electrons from cytochrome c in the IMS and 4 protons from the mitochondrial matrix. This is Cytochrome c oxidase subunit 3 (mt-co3) from Oncorhynchus masou (Cherry salmon).